The sequence spans 631 residues: Probable electron transfer flavoprotein-ubiquinone oxidoreductase, mitochondrial (631 aa).

65–79 (VCIVGGGPAGLATAI) is an FAD binding site. 4 residues coordinate [4Fe-4S] cluster: Cys574, Cys600, Cys603, and Cys606. Positions 591-620 (TRLQINSQNCIHCKTCDIKAPRQDITWKVP) constitute a 4Fe-4S ferredoxin-type domain.

It belongs to the ETF-QO/FixC family. [4Fe-4S] cluster serves as cofactor. FAD is required as a cofactor.

The protein localises to the mitochondrion inner membrane. It catalyses the reaction a ubiquinone + reduced [electron-transfer flavoprotein] = a ubiquinol + oxidized [electron-transfer flavoprotein] + H(+). Accepts electrons from ETF and reduces ubiquinone. The chain is Probable electron transfer flavoprotein-ubiquinone oxidoreductase, mitochondrial (CIR2) from Saccharomyces cerevisiae (strain ATCC 204508 / S288c) (Baker's yeast).